Here is a 170-residue protein sequence, read N- to C-terminus: Myosin regulatory light chain 2 (170 aa).

A compositionally biased stretch (basic residues) spans 1–13 (MSKAAKKKSSKKR). Residues 1–22 (MSKAAKKKSSKKRSGSEAAQFD) are disordered. EF-hand domains lie at 24–59 (KTIQEFKEAFGIMDQNKDGIIDKSDLKDLYASMGQI) and 93–128 (DPEATIVGAFAMFDKKDCGKIKEDDLIKILQNKRGE). 4 residues coordinate Ca(2+): Asp37, Asn39, Asp41, and Asp48.

In terms of assembly, myosin is a hexamer of 2 heavy chains and 4 light chains (two regulatory light chains and two essential light chains).

The sequence is that of Myosin regulatory light chain 2 (mlc-2) from Caenorhabditis elegans.